Reading from the N-terminus, the 541-residue chain is Paromamine 6'-oxidase (541 aa).

The disordered stretch occupies residues 1-29; it reads MKRLRGTLPSDARHAWHPEPLGPAHRDGW. His470 serves as the catalytic Proton acceptor.

Belongs to the GMC oxidoreductase family. Requires FAD as cofactor.

It catalyses the reaction 6'''-deamino-6'''-hydroxyneomycin C + O2 = 6'''-deamino-6'''-oxoneomycin C + H2O2. The enzyme catalyses paromamine + O2 = 6'-oxoparomamine + H2O2. The protein operates within antibiotic biosynthesis; neomycin biosynthesis. Functionally, glucosaminyl-6'-oxidase involved in the biosynthetic pathway of neomycin by mediating FAD-dependent dehydrogenation of paromamine to 6'-dehydro-6'-oxoparomamine. Works in combination with neamine transaminase to replace the 6-hydroxy group of paromamine with an amino group. Also able to collaborate with neomycin C transaminase to replace the 6'''-hydroxy group of 6'''-hydroxyneomycin C with an amino group. This is Paromamine 6'-oxidase (neoG) from Streptomyces fradiae (Streptomyces roseoflavus).